The chain runs to 58 residues: Large ribosomal subunit protein bL32 (58 aa).

It belongs to the bacterial ribosomal protein bL32 family.

In Prochlorococcus marinus (strain MIT 9515), this protein is Large ribosomal subunit protein bL32.